Reading from the N-terminus, the 239-residue chain is MGIIGKSVSLTLFALLCFTSSVFTLGVNQPGSSDPFHSLPQHLPLPPIKLPTLPPAKAPIKLPAYPPAKAPIKLPTLPPAKAPIKLPTLPPIKPPVLPPVYPPKYNKTLVAVRGVVYCKACKYAGVNNVQGAKPVKDAVVRLVCKNKKNSISETKTDKNGYFMLLAPKTVTNYDIKGCRAFLVKSPDTKCSKVSSLHDGGKGSVLKPVLKPGFSSTIMRWFKYSVYNVGPFAFEPTCPK.

Positions 1 to 24 (MGIIGKSVSLTLFALLCFTSSVFT) are cleaved as a signal peptide. N106 carries N-linked (GlcNAc...) asparagine glycosylation.

This sequence belongs to the non-classical AGP family. Specifically expressed in root tips.

It is found in the secreted. It localises to the cell wall. Proteoglycan required for the timing of seed germination. May function in the abscisic acid (ABA) response. The chain is Non-classical arabinogalactan protein 30 from Arabidopsis thaliana (Mouse-ear cress).